The chain runs to 103 residues: Histone H4 (103 aa).

Positions 1-14 (MSGRGKGGKGLGKG) are enriched in gly residues. Positions 1–20 (MSGRGKGGKGLGKGGAKRHR) are disordered. Residues 17 to 21 (KRHRK) mediate DNA binding.

This sequence belongs to the histone H4 family. In terms of assembly, the nucleosome is a histone octamer containing two molecules each of H2A, H2B, H3 and H4 assembled in one H3-H4 heterotetramer and two H2A-H2B heterodimers. The octamer wraps approximately 147 bp of DNA.

The protein resides in the nucleus. The protein localises to the chromosome. Its function is as follows. Core component of nucleosome. Nucleosomes wrap and compact DNA into chromatin, limiting DNA accessibility to the cellular machineries which require DNA as a template. Histones thereby play a central role in transcription regulation, DNA repair, DNA replication and chromosomal stability. DNA accessibility is regulated via a complex set of post-translational modifications of histones, also called histone code, and nucleosome remodeling. This Eimeria tenella (Coccidian parasite) protein is Histone H4.